We begin with the raw amino-acid sequence, 251 residues long: Cell division protein ZapD (251 aa).

The protein belongs to the ZapD family. In terms of assembly, interacts with FtsZ.

The protein localises to the cytoplasm. Its function is as follows. Cell division factor that enhances FtsZ-ring assembly. Directly interacts with FtsZ and promotes bundling of FtsZ protofilaments, with a reduction in FtsZ GTPase activity. In Paraburkholderia phymatum (strain DSM 17167 / CIP 108236 / LMG 21445 / STM815) (Burkholderia phymatum), this protein is Cell division protein ZapD.